The sequence spans 556 residues: Formate--tetrahydrofolate ligase (556 aa).

An ATP-binding site is contributed by 65–72 (TPAGEGKS).

It belongs to the formate--tetrahydrofolate ligase family.

The catalysed reaction is (6S)-5,6,7,8-tetrahydrofolate + formate + ATP = (6R)-10-formyltetrahydrofolate + ADP + phosphate. The protein operates within one-carbon metabolism; tetrahydrofolate interconversion. The sequence is that of Formate--tetrahydrofolate ligase from Streptococcus pneumoniae (strain 70585).